The following is a 150-amino-acid chain: UPF0756 membrane protein APL_0366 (150 aa).

4 helical membrane-spanning segments follow: residues leucine 12 to leucine 34, histidine 52 to glycine 72, phenylalanine 82 to glycine 102, and isoleucine 123 to leucine 143.

The protein belongs to the UPF0756 family.

Its subcellular location is the cell membrane. This is UPF0756 membrane protein APL_0366 from Actinobacillus pleuropneumoniae serotype 5b (strain L20).